A 419-amino-acid chain; its full sequence is Oxamate carbamoyltransferase subunit AllG (419 aa).

The protein belongs to the AllG family. In terms of assembly, the OXTCase is composed of 3 subunits, AllF, AllG and AllH. It depends on Mg(2+) as a cofactor.

It carries out the reaction oxamate + carbamoyl phosphate = N-carbamoyl-2-oxoglycine + phosphate. The protein operates within nitrogen metabolism; (S)-allantoin degradation. Functionally, component of a carbamoyltransferase involved in the anaerobic nitrogen utilization via the assimilation of allantoin. Catalyzes the conversion of oxalurate (N-carbamoyl-2-oxoglycine) to oxamate and carbamoyl phosphate. This Escherichia coli (strain K12) protein is Oxamate carbamoyltransferase subunit AllG.